The sequence spans 341 residues: Ketol-acid reductoisomerase (NADP(+)) (341 aa).

The 180-residue stretch at 2–181 (AKVYYNGDVN…GAARAGVLET (180 aa)) folds into the KARI N-terminal Rossmann domain. Residues 25 to 28 (YGSQ), Arg48, Ser52, and 82 to 85 (DEHQ) each bind NADP(+). His107 is an active-site residue. Gly133 serves as a coordination point for NADP(+). Residues 182–327 (TFKEETETDL…RELREMMPFV (146 aa)) enclose the KARI C-terminal knotted domain. Residues Asp190, Glu194, Glu226, and Glu230 each coordinate Mg(2+). A substrate-binding site is contributed by Ser251.

Belongs to the ketol-acid reductoisomerase family. It depends on Mg(2+) as a cofactor.

The enzyme catalyses (2R)-2,3-dihydroxy-3-methylbutanoate + NADP(+) = (2S)-2-acetolactate + NADPH + H(+). It catalyses the reaction (2R,3R)-2,3-dihydroxy-3-methylpentanoate + NADP(+) = (S)-2-ethyl-2-hydroxy-3-oxobutanoate + NADPH + H(+). Its pathway is amino-acid biosynthesis; L-isoleucine biosynthesis; L-isoleucine from 2-oxobutanoate: step 2/4. The protein operates within amino-acid biosynthesis; L-valine biosynthesis; L-valine from pyruvate: step 2/4. Involved in the biosynthesis of branched-chain amino acids (BCAA). Catalyzes an alkyl-migration followed by a ketol-acid reduction of (S)-2-acetolactate (S2AL) to yield (R)-2,3-dihydroxy-isovalerate. In the isomerase reaction, S2AL is rearranged via a Mg-dependent methyl migration to produce 3-hydroxy-3-methyl-2-ketobutyrate (HMKB). In the reductase reaction, this 2-ketoacid undergoes a metal-dependent reduction by NADPH to yield (R)-2,3-dihydroxy-isovalerate. The protein is Ketol-acid reductoisomerase (NADP(+)) of Shouchella clausii (strain KSM-K16) (Alkalihalobacillus clausii).